Consider the following 271-residue polypeptide: Putative phosphoenolpyruvate synthase regulatory protein (271 aa).

An ADP-binding site is contributed by 151–158 (GVSRSGKT).

It belongs to the pyruvate, phosphate/water dikinase regulatory protein family. PSRP subfamily.

It carries out the reaction [pyruvate, water dikinase] + ADP = [pyruvate, water dikinase]-phosphate + AMP + H(+). The enzyme catalyses [pyruvate, water dikinase]-phosphate + phosphate + H(+) = [pyruvate, water dikinase] + diphosphate. Functionally, bifunctional serine/threonine kinase and phosphorylase involved in the regulation of the phosphoenolpyruvate synthase (PEPS) by catalyzing its phosphorylation/dephosphorylation. The chain is Putative phosphoenolpyruvate synthase regulatory protein from Burkholderia vietnamiensis (strain G4 / LMG 22486) (Burkholderia cepacia (strain R1808)).